A 98-amino-acid chain; its full sequence is NADH-ubiquinone oxidoreductase chain 4L (98 aa).

3 helical membrane passes run 1 to 21 (MTSINLNLMTAFLLALAGVLM), 28 to 48 (STLLCLEGMMLSLYIMLSLLI), and 59 to 79 (APLILLVISACEAAGGLALLV).

This sequence belongs to the complex I subunit 4L family. As to quaternary structure, core subunit of respiratory chain NADH dehydrogenase (Complex I) which is composed of 45 different subunits.

Its subcellular location is the mitochondrion inner membrane. The enzyme catalyses a ubiquinone + NADH + 5 H(+)(in) = a ubiquinol + NAD(+) + 4 H(+)(out). In terms of biological role, core subunit of the mitochondrial membrane respiratory chain NADH dehydrogenase (Complex I) which catalyzes electron transfer from NADH through the respiratory chain, using ubiquinone as an electron acceptor. Part of the enzyme membrane arm which is embedded in the lipid bilayer and involved in proton translocation. The chain is NADH-ubiquinone oxidoreductase chain 4L (MT-ND4L) from Phascolarctos cinereus (Koala).